The primary structure comprises 109 residues: Cell division protein ZapA (109 aa).

A coiled-coil region spans residues 22–99 (EQQDALNMAA…IEQALLEQGR (78 aa)).

This sequence belongs to the ZapA family. Type 1 subfamily. In terms of assembly, homodimer. Interacts with FtsZ.

The protein localises to the cytoplasm. In terms of biological role, activator of cell division through the inhibition of FtsZ GTPase activity, therefore promoting FtsZ assembly into bundles of protofilaments necessary for the formation of the division Z ring. It is recruited early at mid-cell but it is not essential for cell division. The polypeptide is Cell division protein ZapA (Yersinia enterocolitica serotype O:8 / biotype 1B (strain NCTC 13174 / 8081)).